A 306-amino-acid polypeptide reads, in one-letter code: Follistatin-related protein 1 (306 aa).

The N-terminal stretch at Met1–Ala18 is a signal peptide. One can recognise a Follistatin-like domain in the interval Ile28–Leu51. Disulfide bonds link Cys29/Cys40, Cys34/Cys50, Cys52/Cys82, Cys56/Cys75, and Cys64/Cys96. The Kazal-like domain maps to Gly46–Glu98. A glycan (N-linked (GlcNAc...) asparagine) is linked at Asn142. Residues Asn142 to Ala176 enclose the EF-hand 1 domain. A Phosphoserine modification is found at Ser163. Residues Asn173 and Asn178 are each glycosylated (N-linked (GlcNAc...) asparagine). The EF-hand 2 domain occupies Leu191–Pro226. One can recognise a VWFC domain in the interval Cys231–Val285.

As to quaternary structure, homodimer. Interacts with SCN10A. Interacts with DIP2A; DIP2A may act as a cell surface receptor for FSTL1. Interacts with BMP4. Interacts with CD14; this interaction promotes TL4-mediated signaling cascade.

It localises to the secreted. Functionally, secreted glycoprotein that is involved in various physiological processes, such as angiogenesis, regulation of the immune response, cell proliferation and differentiation. Plays a role in the development of the central nervous system, skeletal system, lungs, and ureter. Promotes endothelial cell survival, migration and differentiation into network structures in an AKT-dependent manner. Also promotes survival of cardiac myocytes. Initiates various signaling cascades by activating different receptors on the cell surface such as DIP2A, TLR4 or BMP receptors. The chain is Follistatin-related protein 1 (FSTL1) from Pongo abelii (Sumatran orangutan).